The sequence spans 623 residues: Membralin-like protein At1g60995 (623 aa).

The chain crosses the membrane as a helical span at residues 24 to 44; sequence GFLEYTYLFVAITLFCILVVM. The segment at 99–119 is disordered; the sequence is SLEVSKTDQESSTSEENTDDT. Transmembrane regions (helical) follow at residues 315–335, 363–383, 392–412, and 424–444; these read GVLM…SFTL, IFVH…ILFF, LLAF…LISV, and FFLL…YGFS. Disordered regions lie at residues 506–567 and 602–623; these read NRTT…QAGA and EAQV…LSVD. Positions 514–531 are enriched in polar residues; that stretch reads PSGPNHTTPNQNTETRSF.

This sequence belongs to the membralin family.

It is found in the membrane. The sequence is that of Membralin-like protein At1g60995 from Arabidopsis thaliana (Mouse-ear cress).